Consider the following 672-residue polypeptide: Beta-galactosidase bgaB (672 aa).

R109 lines the substrate pocket. Zn(2+) is bound at residue C113. Residue N147 participates in substrate binding. Residue E148 is the Proton donor of the active site. Zn(2+) contacts are provided by C156, C158, and C161. Catalysis depends on E303, which acts as the Nucleophile. Substrate-binding positions include W311 and 351–354 (EKFH).

Belongs to the glycosyl hydrolase 42 family.

It catalyses the reaction Hydrolysis of terminal non-reducing beta-D-galactose residues in beta-D-galactosides.. Its activity is regulated as follows. By divalent metal ions. Fe(2+), Zn(2+), Cu(2+), Pb(2+) and Sn(2+) inhibit 52, 76.6, 85.3, 100 and 100% of the enzyme activity, respectively. Other metal cations and EDTA do not inhibit this enzyme. Thiol reagents 2-mercaptoethanol and dithiothreitol have no effect on the activity. Sulfhydryl group-blocking reagents p-chloromercuribenzoic acid and iodoacetic acid inhibit 86.2 and 74% of the enzyme activity, respectively. Hydrolyzes 6-bromo-2-naphthyl-beta-D-galactopyranoside and o-nitrophenyl-beta-D-galactopyranoside (ONPG). Possesses a high level of transgalactosylation activity. Hydrolyzes lactose in milk. In Geobacillus kaustophilus, this protein is Beta-galactosidase bgaB (bgaB).